Consider the following 192-residue polypeptide: Large ribosomal subunit protein uL6 (192 aa).

This sequence belongs to the universal ribosomal protein uL6 family. As to quaternary structure, component of the large ribosomal subunit.

It localises to the cytoplasm. In terms of biological role, component of the large ribosomal subunit. The ribosome is a large ribonucleoprotein complex responsible for the synthesis of proteins in the cell. In Ictalurus punctatus (Channel catfish), this protein is Large ribosomal subunit protein uL6 (rpl9).